Consider the following 340-residue polypeptide: N(4)-(Beta-N-acetylglucosaminyl)-L-asparaginase (340 aa).

The signal sequence occupies residues 1–45; that stretch reads MRIIYKQQTMNNNRRDFIKKLGIATAAIAINPLEAKNLLDTSEPK. T197 functions as the Nucleophile in the catalytic mechanism. Substrate contacts are provided by residues 225–228 and 248–251; these read RVGD and TGHG.

Belongs to the Ntn-hydrolase family. In terms of assembly, heterotetramer of two alpha and two beta chains arranged as a dimer of alpha/beta heterodimers. Post-translationally, cleaved into an alpha and beta chain by autocatalysis; this activates the enzyme. The N-terminal residue of the beta subunit is responsible for the nucleophile hydrolase activity.

It localises to the periplasm. It catalyses the reaction N(4)-(beta-N-acetyl-D-glucosaminyl)-L-asparagine + H2O = N-acetyl-beta-D-glucosaminylamine + L-aspartate + H(+). In terms of biological role, cleaves the GlcNAc-Asn bond which joins oligosaccharides to the peptide of asparagine-linked glycoproteins. Requires that the glycosylated asparagine moiety is not substituted on its N-(R1) and C- (R2) terminus. The polypeptide is N(4)-(Beta-N-acetylglucosaminyl)-L-asparaginase (Elizabethkingia miricola (Chryseobacterium miricola)).